A 403-amino-acid chain; its full sequence is Acetate kinase (403 aa).

Asn7 is a Mg(2+) binding site. Residue Lys14 coordinates ATP. Arg97 is a binding site for substrate. Residue Asp154 is the Proton donor/acceptor of the active site. Residues His213 to Gly217, Asp287 to Arg289, and Gly335 to Asn339 each bind ATP. Mg(2+) is bound at residue Glu388.

It belongs to the acetokinase family. Homodimer. It depends on Mg(2+) as a cofactor. Requires Mn(2+) as cofactor.

It localises to the cytoplasm. It catalyses the reaction acetate + ATP = acetyl phosphate + ADP. It functions in the pathway metabolic intermediate biosynthesis; acetyl-CoA biosynthesis; acetyl-CoA from acetate: step 1/2. In terms of biological role, catalyzes the formation of acetyl phosphate from acetate and ATP. Can also catalyze the reverse reaction. The chain is Acetate kinase from Synechococcus sp. (strain JA-2-3B'a(2-13)) (Cyanobacteria bacterium Yellowstone B-Prime).